We begin with the raw amino-acid sequence, 353 residues long: UDP-3-O-acylglucosamine N-acyltransferase (353 aa).

His-246 functions as the Proton acceptor in the catalytic mechanism.

The protein belongs to the transferase hexapeptide repeat family. LpxD subfamily. As to quaternary structure, homotrimer.

The catalysed reaction is a UDP-3-O-[(3R)-3-hydroxyacyl]-alpha-D-glucosamine + a (3R)-hydroxyacyl-[ACP] = a UDP-2-N,3-O-bis[(3R)-3-hydroxyacyl]-alpha-D-glucosamine + holo-[ACP] + H(+). The protein operates within bacterial outer membrane biogenesis; LPS lipid A biosynthesis. Its function is as follows. Catalyzes the N-acylation of UDP-3-O-acylglucosamine using 3-hydroxyacyl-ACP as the acyl donor. Is involved in the biosynthesis of lipid A, a phosphorylated glycolipid that anchors the lipopolysaccharide to the outer membrane of the cell. This is UDP-3-O-acylglucosamine N-acyltransferase from Chlorobaculum tepidum (strain ATCC 49652 / DSM 12025 / NBRC 103806 / TLS) (Chlorobium tepidum).